The following is a 152-amino-acid chain: Early glycoprotein GP48 (152 aa).

The N-terminal stretch at 1–25 (MVMMLRTWRLLPMVLLAAYCYCVFG) is a signal peptide. N-linked (GlcNAc...) asparagine; by host glycans are attached at residues Asn48, Asn53, Asn61, Asn69, Asn108, Asn112, Asn122, Asn139, and Asn148.

Belongs to the RL11 family. N-glycosylated and possibly O-glycosylated.

Its subcellular location is the virion membrane. The protein is Early glycoprotein GP48 (UL4) of Homo sapiens (Human).